The chain runs to 342 residues: 29 kDa ribonucleoprotein, chloroplastic (342 aa).

Residues 1–65 (MSASASSLSA…PAEYPSRFVR (65 aa)) constitute a chloroplast transit peptide. The region spanning 99–177 (LKLFVGNLSF…RPLRVNAGPP (79 aa)) is the RRM 1 domain. Residues Ser-107 and Ser-204 each carry the phosphoserine modification. The interval 167–255 (GRPLRVNAGP…GSGSGSGSGS (89 aa)) is disordered. Positions 178 to 256 (PPKREESFSR…SGSGSGSGSG (79 aa)) are linker (Gly-rich). 2 stretches are compositionally biased toward gly residues: residues 190 to 237 (RSGG…GYGG) and 245 to 255 (SGSGSGSGSGS). Residues 257–335 (NRLYVGNLSW…RQIRVSEAEA (79 aa)) form the RRM 2 domain.

It is found in the plastid. Its subcellular location is the chloroplast. In terms of biological role, stabilizes specific chloroplast mRNAs. Required for normal chloroplast development under cold stress conditions by stabilizing transcripts of numerous mRNAs under these conditions. The sequence is that of 29 kDa ribonucleoprotein, chloroplastic from Arabidopsis thaliana (Mouse-ear cress).